The following is a 174-amino-acid chain: uncharacterized protein (174 aa).

A helical membrane pass occupies residues 7-27 (LIILAIFTLWVGGFGYYLYLI).

Its subcellular location is the membrane. This is an uncharacterized protein from Rickettsia prowazekii (strain Madrid E).